A 223-amino-acid chain; its full sequence is Phosphoribosylformylglycinamidine synthase subunit PurQ (223 aa).

The region spanning 3-223 (SAVILLPGLN…LFAGALGITA (221 aa)) is the Glutamine amidotransferase type-1 domain. Catalysis depends on cysteine 87, which acts as the Nucleophile. Catalysis depends on residues histidine 197 and glutamate 199.

As to quaternary structure, part of the FGAM synthase complex composed of 1 PurL, 1 PurQ and 2 PurS subunits.

Its subcellular location is the cytoplasm. The enzyme catalyses N(2)-formyl-N(1)-(5-phospho-beta-D-ribosyl)glycinamide + L-glutamine + ATP + H2O = 2-formamido-N(1)-(5-O-phospho-beta-D-ribosyl)acetamidine + L-glutamate + ADP + phosphate + H(+). It catalyses the reaction L-glutamine + H2O = L-glutamate + NH4(+). It functions in the pathway purine metabolism; IMP biosynthesis via de novo pathway; 5-amino-1-(5-phospho-D-ribosyl)imidazole from N(2)-formyl-N(1)-(5-phospho-D-ribosyl)glycinamide: step 1/2. Its function is as follows. Part of the phosphoribosylformylglycinamidine synthase complex involved in the purines biosynthetic pathway. Catalyzes the ATP-dependent conversion of formylglycinamide ribonucleotide (FGAR) and glutamine to yield formylglycinamidine ribonucleotide (FGAM) and glutamate. The FGAM synthase complex is composed of three subunits. PurQ produces an ammonia molecule by converting glutamine to glutamate. PurL transfers the ammonia molecule to FGAR to form FGAM in an ATP-dependent manner. PurS interacts with PurQ and PurL and is thought to assist in the transfer of the ammonia molecule from PurQ to PurL. The sequence is that of Phosphoribosylformylglycinamidine synthase subunit PurQ from Brucella suis biovar 1 (strain 1330).